The chain runs to 140 residues: Large ribosomal subunit protein uL14 (140 aa).

The protein belongs to the universal ribosomal protein uL14 family.

In Nicotiana tabacum (Common tobacco), this protein is Large ribosomal subunit protein uL14 (RPL23).